The primary structure comprises 569 residues: 3-(3-hydroxy-phenyl)propionate/3-hydroxycinnamic acid hydroxylase (569 aa).

FAD-binding positions include 12–41 (DVVVVGAGPSGLTLANILGLQGVATLVVDE) and 277–287 (FRKGRLMLAGD).

Belongs to the PheA/TfdB FAD monooxygenase family. The cofactor is FAD.

The catalysed reaction is 3-(3-hydroxyphenyl)propanoate + NADH + O2 + H(+) = 3-(2,3-dihydroxyphenyl)propanoate + NAD(+) + H2O. It carries out the reaction (2E)-3-(3-hydroxyphenyl)prop-2-enoate + NADH + O2 + H(+) = (2E)-3-(2,3-dihydroxyphenyl)prop-2-enoate + NAD(+) + H2O. It functions in the pathway aromatic compound metabolism; 3-phenylpropanoate degradation. Catalyzes the insertion of one atom of molecular oxygen into position 2 of the phenyl ring of 3-(3-hydroxyphenyl)propionate (3-HPP) and hydroxycinnamic acid (3HCI). The protein is 3-(3-hydroxy-phenyl)propionate/3-hydroxycinnamic acid hydroxylase of Mycolicibacterium vanbaalenii (strain DSM 7251 / JCM 13017 / BCRC 16820 / KCTC 9966 / NRRL B-24157 / PYR-1) (Mycobacterium vanbaalenii).